The sequence spans 94 residues: MSIKENSYFAGGVKSLGFNQHGQDVSVGVMLPGEYTFGTQAPERMTVVKGALVVKRVGEADWTTYSSGESFDVEGNSSFELQVKDATAYLCEYL.

The protein belongs to the nucleoside phosphorylase PpnP family.

It carries out the reaction a purine D-ribonucleoside + phosphate = a purine nucleobase + alpha-D-ribose 1-phosphate. The enzyme catalyses adenosine + phosphate = alpha-D-ribose 1-phosphate + adenine. The catalysed reaction is cytidine + phosphate = cytosine + alpha-D-ribose 1-phosphate. It catalyses the reaction guanosine + phosphate = alpha-D-ribose 1-phosphate + guanine. It carries out the reaction inosine + phosphate = alpha-D-ribose 1-phosphate + hypoxanthine. The enzyme catalyses thymidine + phosphate = 2-deoxy-alpha-D-ribose 1-phosphate + thymine. The catalysed reaction is uridine + phosphate = alpha-D-ribose 1-phosphate + uracil. It catalyses the reaction xanthosine + phosphate = alpha-D-ribose 1-phosphate + xanthine. Its function is as follows. Catalyzes the phosphorolysis of diverse nucleosides, yielding D-ribose 1-phosphate and the respective free bases. Can use uridine, adenosine, guanosine, cytidine, thymidine, inosine and xanthosine as substrates. Also catalyzes the reverse reactions. The sequence is that of Pyrimidine/purine nucleoside phosphorylase from Vibrio parahaemolyticus serotype O3:K6 (strain RIMD 2210633).